Here is a 319-residue protein sequence, read N- to C-terminus: CBBY-like protein (319 aa).

Residues 1-65 (MATVKISLSL…YRSSRSVGVT (65 aa)) constitute a chloroplast transit peptide. Aspartate 82 acts as the Nucleophile in catalysis. Mg(2+) contacts are provided by aspartate 82 and aspartate 84. Aspartate 82 provides a ligand contact to substrate. Aspartate 84 acts as the Proton donor in catalysis. Substrate contacts are provided by residues glutamate 91, 125–129 (GGKER), 158–161 (HKQK), and 198–204 (STSNEKA). Position 258 (aspartate 258) interacts with Mg(2+).

It belongs to the HAD-like hydrolase superfamily. DOG/GPP family. It depends on Mg(2+) as a cofactor.

Its subcellular location is the plastid. The protein resides in the chloroplast. It carries out the reaction D-xylulose 1,5-bisphosphate + H2O = D-xylulose 5-phosphate + phosphate. Functionally, highly selective xylulose-1,5-bisphosphate (XuBP) phosphatase. Also shows activity towards ribulose-1,5-bisphosphate (RuBP) and fructose-1,6-bisphosphate (FBP), but not towards fructose-6-phosphate (F6P) or ribulose-5-phosphate (Ru5P). Degrades xylulose-1,5-bisphosphate, a potent inhibitor of rubisco produced by the rubisco itself. The polypeptide is CBBY-like protein (Arabidopsis thaliana (Mouse-ear cress)).